Reading from the N-terminus, the 117-residue chain is MDKKAARIRRATKARRKMLELGATRLVVHRTPRHIYAQVIAASGAEVLASASTVESTIREQVKYTGNADAAAAVGKAIAERALAKGVTTVAFDRSGFQYHGRVAALAAAAREAGLQF.

Belongs to the universal ribosomal protein uL18 family. As to quaternary structure, part of the 50S ribosomal subunit; part of the 5S rRNA/L5/L18/L25 subcomplex. Contacts the 5S and 23S rRNAs.

Its function is as follows. This is one of the proteins that bind and probably mediate the attachment of the 5S RNA into the large ribosomal subunit, where it forms part of the central protuberance. The chain is Large ribosomal subunit protein uL18 from Tolumonas auensis (strain DSM 9187 / NBRC 110442 / TA 4).